An 809-amino-acid chain; its full sequence is MVDSIHRIASALDTAKVITREAAAVATSKLGESSYTYYSQNINPQQLVTLLNSRNSREVRDAMKRIISIMASDDDSIDVQLYFADVVKNITTNDTKVKRLIHLYLLRFAENDPNLTLLSINSLQKSLSDSNSELRCFALSALSDMKMSSLAPIILHTVKKLVTDPSAMVRGEVALAIIKLYRAGKNDYHEELLDILKELMADTDPKVISCAVLAYKECYADHLELLHGHFRRYCRIIKQLDSWSQSYLIELLIKYCKQYLPKPTVVDKSSEGSPRSCPLPDKYNEIEYPSYEVVNDPDLDLFLQSLNCLIYSSNPTVILSCCNALYQLASPLQMKNTKFIEALVRTVTMTENQGNKEMLLQAIHFLSILDQTLFLPYTKKFYVFPKDPIVASIWKIQILSTLINESNVKEIFKELKYYVASAHFPENVVIMAVKSLSRCGQLSTSWESHVMKWLIDHMESHNLSASVLDAYVNVIRMLVQKNPTKHLRIIFKLADLLTVQTSLADNARAGIVWLFGEIASIEFKICPDVLRRLIQNFSNEGPETRCQILVLSAKLLSYDIDNFKQAQVTGSEENNQNPPYYDFSGSRISQMYNAVLYLAKYDDEFDIRDRARMISSLFDSGKYEIVSLLLQAPKPTARSDDFIVSARLETHTPEIKEFFRMLPWNTEITEVGETGNDIREGAELKDYNKYKKSFSSQSFITNNSARSFTSSSNAKLTGINDGDSNSISGKGNVNTFTSQNGKKYRLQSLDEFFSDIPERKSKPRKIIKVVEESSDEDEDESEESSDDDEYSDSSLGTSSSGTSSSHLEL.

HEAT repeat units follow at residues 37–76, 112–151, 153–186, 187–224, and 524–561; these read YYSQ…DDDS, DPNL…SSLA, IILH…AGKN, DYHE…DHLE, and KICP…YDID. Serine 693, serine 698, serine 724, and serine 726 each carry phosphoserine. Disordered stretches follow at residues 708-739 and 763-809; these read FTSS…FTSQ and PRKI…HLEL. The segment covering 722-739 has biased composition (polar residues); sequence GDSNSISGKGNVNTFTSQ. A compositionally biased stretch (acidic residues) spans 772-791; the sequence is ESSDEDEDESEESSDDDEYS. The segment covering 792–809 has biased composition (low complexity); sequence DSSLGTSSSGTSSSHLEL.

It belongs to the adaptor complexes large subunit family. As to quaternary structure, adaptor protein complex 3 (AP-3) is a heterotetramer composed of 2 large adaptins (APL5 and APL6), a medium adaptin (APM3) and a small adaptin (APS3). Pyrophosphorylated by 5-diphosphoinositol pentakisphosphate (5-IP7). Serine pyrophosphorylation is achieved by Mg(2+)-dependent, but enzyme independent transfer of a beta-phosphate from a inositol pyrophosphate to a pre-phosphorylated serine residue.

Its subcellular location is the golgi apparatus. It is found in the cytoplasmic vesicle. The protein localises to the clathrin-coated vesicle membrane. Part of the AP-3 complex, an adaptor-related complex which is not clathrin-associated. The complex is associated with the Golgi region as well as more peripheral structures. It facilitates the budding of vesicles from the Golgi membrane and may be directly involved in trafficking to the vacuole. Required for the transport via the ALP pathway, which directs the transport of the cargo proteins PHO8 and VAM3 to the vacuole. The chain is AP-3 complex subunit beta (APL6) from Saccharomyces cerevisiae (strain ATCC 204508 / S288c) (Baker's yeast).